The following is a 355-amino-acid chain: Isopentenyl-diphosphate delta-isomerase (355 aa).

6-7 (RK) contacts substrate. FMN-binding positions include 62-64 (AMT), serine 93, and asparagine 122. Substrate is bound at residue glutamine 152. Glutamate 153 is a binding site for Mg(2+). Residues lysine 184, threonine 214, 258 to 259 (GG), and 280 to 281 (AG) each bind FMN.

This sequence belongs to the IPP isomerase type 2 family. Homooctamer. Dimer of tetramers. It depends on FMN as a cofactor. The cofactor is NADPH. Mg(2+) serves as cofactor.

Its subcellular location is the cytoplasm. The enzyme catalyses isopentenyl diphosphate = dimethylallyl diphosphate. Its function is as follows. Involved in the biosynthesis of isoprenoids. Catalyzes the 1,3-allylic rearrangement of the homoallylic substrate isopentenyl (IPP) to its allylic isomer, dimethylallyl diphosphate (DMAPP). The sequence is that of Isopentenyl-diphosphate delta-isomerase from Bacillus pumilus (strain SAFR-032).